The chain runs to 500 residues: Glycerol kinase (500 aa).

Threonine 16 lines the ADP pocket. ATP is bound by residues threonine 16 and threonine 17. Threonine 16 serves as a coordination point for sn-glycerol 3-phosphate. Residue arginine 20 coordinates ADP. Sn-glycerol 3-phosphate contacts are provided by arginine 86, glutamate 87, tyrosine 138, and aspartate 247. Glycerol-binding residues include arginine 86, glutamate 87, tyrosine 138, aspartate 247, and glutamine 248. Residues threonine 269 and glycine 312 each coordinate ADP. ATP is bound by residues threonine 269, glycine 312, glutamine 316, and glycine 413. 2 residues coordinate ADP: glycine 413 and asparagine 417.

Belongs to the FGGY kinase family.

It carries out the reaction glycerol + ATP = sn-glycerol 3-phosphate + ADP + H(+). It functions in the pathway polyol metabolism; glycerol degradation via glycerol kinase pathway; sn-glycerol 3-phosphate from glycerol: step 1/1. Inhibited by fructose 1,6-bisphosphate (FBP). Its function is as follows. Key enzyme in the regulation of glycerol uptake and metabolism. Catalyzes the phosphorylation of glycerol to yield sn-glycerol 3-phosphate. The polypeptide is Glycerol kinase (Rippkaea orientalis (strain PCC 8801 / RF-1) (Cyanothece sp. (strain PCC 8801))).